The chain runs to 284 residues: 2-dehydro-3-deoxyphosphooctonate aldolase (284 aa).

The protein belongs to the KdsA family.

Its subcellular location is the cytoplasm. It catalyses the reaction D-arabinose 5-phosphate + phosphoenolpyruvate + H2O = 3-deoxy-alpha-D-manno-2-octulosonate-8-phosphate + phosphate. Its pathway is carbohydrate biosynthesis; 3-deoxy-D-manno-octulosonate biosynthesis; 3-deoxy-D-manno-octulosonate from D-ribulose 5-phosphate: step 2/3. It participates in bacterial outer membrane biogenesis; lipopolysaccharide biosynthesis. This chain is 2-dehydro-3-deoxyphosphooctonate aldolase, found in Haemophilus influenzae (strain PittEE).